Here is a 2515-residue protein sequence, read N- to C-terminus: Nonribosomal peptide synthetase tpzA (2515 aa).

The interval 246–648 (ELATRQPGAQ…GRMGTQVKLR (403 aa)) is adenylation 1. The Carrier 1 domain occupies 794 to 867 (SEVEHLIHAI…DMATVALKTS (74 aa)). O-(pantetheine 4'-phosphoryl)serine is present on Ser-828. The segment at 924–1332 (DAYPCSPLQE…IRSVPHITPE (409 aa)) is condensation 1. The tract at residues 1357–1758 (RKQSQETPSA…GRMNDQIKLR (402 aa)) is adenylation 2. Residues 1900 to 1976 (LATTNEERTL…AILSHLTGRK (77 aa)) form the Carrier 2 domain. An O-(pantetheine 4'-phosphoryl)serine modification is found at Ser-1937. The condensation 2 stretch occupies residues 2013 to 2431 (VEDIYPCGPI…LGILPPEEQK (419 aa)). Positions 2436 to 2512 (PSLSAAVVRL…AMARRSLVVS (77 aa)) constitute a Carrier 3 domain. Ser-2473 carries the O-(pantetheine 4'-phosphoryl)serine modification.

The protein belongs to the NRP synthetase family.

Its pathway is secondary metabolite biosynthesis. Its function is as follows. Nonribosomal peptide synthetase; part of the gene cluster that mediates the biosynthesis of terreazepine,. The first step of terreazepine biosynthesis is catalyzed by the indoleamine 2,3-dioxygenase tpzB which produces N-formyl-kynurenine through the catabolism of tryptophan. The two-module NRPS tpzA then utilizes anthranilate and kynurenine to assemble terreazepine. The first adenylation domain of tpzA (A1) loads anthranilate onto the T1 domain, while A2 loads kynurenine, generated through spontaneous nonenzymatic deformylation of the tzpB-supplied N-formyl-kynurenine. TpzA produces a 2:1 mixture of S-R enantiomers, which suggests that the A2 domain accepts both D- and L-kynurenine. The peptide bond formation between the tethered amino acids is catalyzed by the first condensation domain (C1) between anthranilate's carbonyl carbon and kynurenine's aliphatic primary amine. The second C domain (C2) catalyzes the final cyclization event between the aromatic amine of kynurenine and the tethered carbonyl carbon, yielding the final terreazepine product. The T3 domain may facilitate the interaction with downstream tailoring enzymes. This Aspergillus terreus (strain NIH 2624 / FGSC A1156) protein is Nonribosomal peptide synthetase tpzA.